Here is a 324-residue protein sequence, read N- to C-terminus: Aldo-keto reductase family 1 member A1 (324 aa).

Phosphoserine is present on Ser-3. NADP(+) contacts are provided by residues 10-19 (GQKMPLIGLG), Thr-20, and Trp-21. Phosphoserine is present on Ser-37. Position 44 (Asp-44) interacts with NADP(+). The Proton donor role is filled by Tyr-49. N6-acetyllysine; alternate is present on Lys-126. Lys-126 bears the N6-succinyllysine; alternate mark. Lys-144 carries the post-translational modification N6-succinyllysine. Ser-161, Asn-162, Ser-210, Leu-212, Ser-214, Ser-215, Lys-262, Ser-263, Ile-264, Thr-265, Arg-268, Gln-271, and Asn-272 together coordinate NADP(+). Residue Ser-210 is modified to Phosphoserine.

Belongs to the aldo/keto reductase family.

It is found in the cytoplasm. The protein resides in the cytosol. It localises to the apical cell membrane. The catalysed reaction is a primary alcohol + NADP(+) = an aldehyde + NADPH + H(+). The enzyme catalyses L-gulonate + NADP(+) = aldehydo-D-glucuronate + NADPH + H(+). It catalyses the reaction L-gulono-1,4-lactone + NADP(+) = D-glucurono-3,6-lactone + NADPH + H(+). It carries out the reaction allyl alcohol + NADP(+) = acrolein + NADPH + H(+). The catalysed reaction is glycerol + NADP(+) = D-glyceraldehyde + NADPH + H(+). The enzyme catalyses glycerol + NADP(+) = L-glyceraldehyde + NADPH + H(+). It catalyses the reaction hydroxyacetone + NADP(+) = methylglyoxal + NADPH + H(+). It carries out the reaction 3-deoxyfructose + NADP(+) = 3-deoxyglucosone + NADPH + H(+). The catalysed reaction is (R)-mevalonate + NADP(+) = (R)-mevaldate + NADPH + H(+). The enzyme catalyses S-nitroso-CoA + NADPH + H(+) = sulfinamide-CoA + NADP(+). It catalyses the reaction S-nitrosoglutathione + NADPH + H(+) = S-(hydroxysulfenamide)glutathione + NADP(+). Its function is as follows. Catalyzes the NADPH-dependent reduction of a wide variety of carbonyl-containing compounds to their corresponding alcohols. Displays enzymatic activity towards endogenous metabolites such as aromatic and aliphatic aldehydes, ketones, monosaccharides and bile acids, with a preference for negatively charged substrates, such as glucuronate and succinic semialdehyde. Plays an important role by catalyzing the reduction of D-glucuronic acid and D-glucurono-gamma-lactone. Functions as a detoxifiying enzyme by reducing a range of toxic aldehydes. Reduces methylglyoxal and 3-deoxyglucosone, which are present at elevated levels under hyperglycemic conditions and are cytotoxic. Involved also in the detoxification of lipid-derived aldehydes like acrolein. Plays a role in the activation of procarcinogens, such as polycyclic aromatic hydrocarbon trans-dihydrodiols, and in the metabolism of various xenobiotics and drugs. Also acts as an inhibitor of protein S-nitrosylation by mediating degradation of S-nitroso-coenzyme A (S-nitroso-CoA), a cofactor required to S-nitrosylate proteins. S-nitroso-CoA reductase activity is involved in reprogramming intermediary metabolism in renal proximal tubules, notably by inhibiting protein S-nitrosylation of isoform 2 of PKM (PKM2). Also acts as a S-nitroso-glutathione reductase by catalyzing the NADPH-dependent reduction of S-nitrosoglutathione. Displays no reductase activity towards retinoids. This is Aldo-keto reductase family 1 member A1 (AKR1A1) from Cricetulus griseus (Chinese hamster).